Consider the following 398-residue polypeptide: Tyrosine--tRNA ligase (398 aa).

Residues 48–57 (PTGADIHLGH) carry the 'HIGH' region motif. The short motif at 235 to 239 (KMSKS) is the 'KMSKS' region element. Lysine 238 contacts ATP. In terms of domain architecture, S4 RNA-binding spans 334 to 398 (VKLAYLLGAT…GKNKFVRLVL (65 aa)).

The protein belongs to the class-I aminoacyl-tRNA synthetase family. TyrS type 2 subfamily. Homodimer.

The protein localises to the cytoplasm. The enzyme catalyses tRNA(Tyr) + L-tyrosine + ATP = L-tyrosyl-tRNA(Tyr) + AMP + diphosphate + H(+). Catalyzes the attachment of tyrosine to tRNA(Tyr) in a two-step reaction: tyrosine is first activated by ATP to form Tyr-AMP and then transferred to the acceptor end of tRNA(Tyr). The sequence is that of Tyrosine--tRNA ligase from Trichormus variabilis (strain ATCC 29413 / PCC 7937) (Anabaena variabilis).